A 197-amino-acid chain; its full sequence is MKRQLALGTNNLNKVKEVSSILMELGIQILTPKDLKVSFNPEETGSTFKENALIKAKELFYLTKIPSIADDSGICVSALKDEPGVYSARFGGPELNDEGRALLLLEKLKGNQNRKAYYACAIAYVDESTEQSFEGRCEGLISEEYDRIGIYGFGYDPIFIFPPLQKPFSQIQEETKNSVSHRKKALDELLKFLKTKP.

9–14 (TNNLNK) serves as a coordination point for substrate. Residues Glu-42 and Asp-71 each coordinate Mg(2+). The active-site Proton acceptor is the Asp-71. Residues Ser-72, 153-156 (FGYD), Lys-176, and 181-182 (HR) contribute to the substrate site.

It belongs to the HAM1 NTPase family. Homodimer. Requires Mg(2+) as cofactor.

The catalysed reaction is XTP + H2O = XMP + diphosphate + H(+). The enzyme catalyses dITP + H2O = dIMP + diphosphate + H(+). It catalyses the reaction ITP + H2O = IMP + diphosphate + H(+). In terms of biological role, pyrophosphatase that catalyzes the hydrolysis of nucleoside triphosphates to their monophosphate derivatives, with a high preference for the non-canonical purine nucleotides XTP (xanthosine triphosphate), dITP (deoxyinosine triphosphate) and ITP. Seems to function as a house-cleaning enzyme that removes non-canonical purine nucleotides from the nucleotide pool, thus preventing their incorporation into DNA/RNA and avoiding chromosomal lesions. The protein is dITP/XTP pyrophosphatase of Leptospira interrogans serogroup Icterohaemorrhagiae serovar copenhageni (strain Fiocruz L1-130).